Reading from the N-terminus, the 163-residue chain is Transcription elongation factor GreA (163 aa).

Residues 49–80 (ENAEYDAARDRQSEVERRILELERILENAEII) adopt a coiled-coil conformation.

This sequence belongs to the GreA/GreB family.

Its function is as follows. Necessary for efficient RNA polymerase transcription elongation past template-encoded arresting sites. The arresting sites in DNA have the property of trapping a certain fraction of elongating RNA polymerases that pass through, resulting in locked ternary complexes. Cleavage of the nascent transcript by cleavage factors such as GreA or GreB allows the resumption of elongation from the new 3'terminus. GreA releases sequences of 2 to 3 nucleotides. The chain is Transcription elongation factor GreA from Mycoplasmopsis agalactiae (strain NCTC 10123 / CIP 59.7 / PG2) (Mycoplasma agalactiae).